Reading from the N-terminus, the 88-residue chain is Putative membrane protein insertion efficiency factor (88 aa).

This sequence belongs to the UPF0161 family.

It is found in the cell inner membrane. In terms of biological role, could be involved in insertion of integral membrane proteins into the membrane. The protein is Putative membrane protein insertion efficiency factor of Synechococcus sp. (strain CC9311).